A 142-amino-acid polypeptide reads, in one-letter code: MKTYTAKPETVQRDWFVVDAAGQTLGRLATEIARRLRGKHKPEYTPHVDTGDYIVVINAEQVRVTGAKTTDKMYYHHSGFPGGIKSINFEKLIAKAPERVIETAVKGMLPKNPLGRDMYRKLKVYKGASHPHTAQQPQELKI.

Belongs to the universal ribosomal protein uL13 family. Part of the 50S ribosomal subunit.

Functionally, this protein is one of the early assembly proteins of the 50S ribosomal subunit, although it is not seen to bind rRNA by itself. It is important during the early stages of 50S assembly. This is Large ribosomal subunit protein uL13 from Pseudomonas aeruginosa (strain LESB58).